A 328-amino-acid chain; its full sequence is RNA 3'-terminal phosphate cyclase (328 aa).

Residues Q100 and 276-280 (HLADQ) contribute to the ATP site. H302 serves as the catalytic Tele-AMP-histidine intermediate.

This sequence belongs to the RNA 3'-terminal cyclase family. Type 1 subfamily.

It localises to the cytoplasm. It carries out the reaction a 3'-end 3'-phospho-ribonucleotide-RNA + ATP = a 3'-end 2',3'-cyclophospho-ribonucleotide-RNA + AMP + diphosphate. Its function is as follows. Catalyzes the conversion of 3'-phosphate to a 2',3'-cyclic phosphodiester at the end of RNA. The mechanism of action of the enzyme occurs in 3 steps: (A) adenylation of the enzyme by ATP; (B) transfer of adenylate to an RNA-N3'P to produce RNA-N3'PP5'A; (C) and attack of the adjacent 2'-hydroxyl on the 3'-phosphorus in the diester linkage to produce the cyclic end product. The biological role of this enzyme is unknown but it is likely to function in some aspects of cellular RNA processing. This Archaeoglobus fulgidus (strain ATCC 49558 / DSM 4304 / JCM 9628 / NBRC 100126 / VC-16) protein is RNA 3'-terminal phosphate cyclase (rtcA).